Consider the following 404-residue polypeptide: Multidrug resistance protein MdtG (404 aa).

Transmembrane regions (helical) follow at residues 19–39 (LGCFLTGAAFSLVMPFLPLYV), 56–76 (LVFSITFLFSAIASPFWGGLA), 90–110 (LGMAIVMLLMGMAQNIWQFLI), 113–133 (ALLGLLGGFILNANALIATQV), 144–164 (TLSTGGVSGALLGPLAGGLLA), 171–191 (PVFFITASVLFICFLLTFFFI), 222–242 (LFVTTLIIQVATGSIAPILTL), 254–274 (IAFISGMIASVPGVAALLSAP), 288–308 (ILIVALIISVLLLIPMSFVQT), 317–337 (FLLGAADGALLPAVQTLLVYN), and 376–396 (AVFCVTAGVVLFNAIYSWNSL).

The protein belongs to the major facilitator superfamily. DHA1 family. MdtG (TC 2.A.1.2.20) subfamily.

The protein localises to the cell inner membrane. In Salmonella choleraesuis (strain SC-B67), this protein is Multidrug resistance protein MdtG.